The sequence spans 471 residues: Putative metabolite transport protein YncC (471 aa).

The next 12 membrane-spanning stretches (helical) occupy residues 13 to 33 (LIMI…GVIN), 50 to 70 (VTEG…ALLC), 88 to 108 (FLFF…IMAV), 111 to 131 (FLLG…LAEM), 146 to 166 (LMIV…GVTM), 175 to 195 (YMLV…LKVP), 256 to 276 (LLWI…NSIM), 295 to 315 (IANI…IWLV), 323 to 343 (ILLI…IFSI), 358 to 378 (LTVL…WLVI), 393 to 413 (ISVF…PILL), and 416 to 436 (VGLS…IGFV).

This sequence belongs to the major facilitator superfamily. Sugar transporter (TC 2.A.1.1) family.

It is found in the cell membrane. The protein is Putative metabolite transport protein YncC (yncC) of Bacillus subtilis (strain 168).